The sequence spans 551 residues: Cu(2+) suppressing and bleomycin sensitive protein 1 (551 aa).

Coiled-coil stretches lie at residues 174–213 (REID…EEID) and 249–300 (NSLL…DSGK). A disordered region spans residues 513–551 (EEKAQNSTSSDGSDDDDNGESGIDSNSNDSEPESEYQQE). Over residues 532 to 541 (ESGIDSNSND) the composition is skewed to low complexity. The segment covering 542 to 551 (SEPESEYQQE) has biased composition (acidic residues).

It belongs to the CUB1 family. Monomer. In terms of processing, phosphorylated by PKA in vitro.

Its subcellular location is the cytoplasm. The protein resides in the nucleus. Functionally, involved in bleomycin tolerance with links to DNA repair and/or proteasome function. In Saccharomyces cerevisiae (strain ATCC 204508 / S288c) (Baker's yeast), this protein is Cu(2+) suppressing and bleomycin sensitive protein 1 (CUB1).